Consider the following 156-residue polypeptide: Large ribosomal subunit protein eL24 (156 aa).

Residues 87 to 156 (LELIKERRSQ…AFQKVHATSR (70 aa)) form a disordered region. Positions 89 to 129 (LIKERRSQKPSDRKAARDVKLAKDKEAKKADKAARKAEKAK) are enriched in basic and acidic residues. Residues 130–147 (SAAAGAQSKVSKQQSKGA) are compositionally biased toward low complexity.

This sequence belongs to the eukaryotic ribosomal protein eL24 family.

The chain is Large ribosomal subunit protein eL24 (RPL24) from Debaryomyces hansenii (strain ATCC 36239 / CBS 767 / BCRC 21394 / JCM 1990 / NBRC 0083 / IGC 2968) (Yeast).